The primary structure comprises 343 residues: Methionine import ATP-binding protein MetN (343 aa).

Positions 2-241 constitute an ABC transporter domain; it reads IKLSNITKVF…PKTPLAQKFI (240 aa). Residue 38-45 coordinates ATP; that stretch reads GASGAGKS.

This sequence belongs to the ABC transporter superfamily. Methionine importer (TC 3.A.1.24) family. In terms of assembly, the complex is composed of two ATP-binding proteins (MetN), two transmembrane proteins (MetI) and a solute-binding protein (MetQ).

It localises to the cell inner membrane. It catalyses the reaction L-methionine(out) + ATP + H2O = L-methionine(in) + ADP + phosphate + H(+). The enzyme catalyses D-methionine(out) + ATP + H2O = D-methionine(in) + ADP + phosphate + H(+). In terms of biological role, part of the ABC transporter complex MetNIQ involved in methionine import. Responsible for energy coupling to the transport system. This is Methionine import ATP-binding protein MetN from Shigella flexneri serotype 5b (strain 8401).